The primary structure comprises 1249 residues: AMB antimetabolite synthetase AmbB (1249 aa).

Residues 245–633 are adenylation; it reads FEAQARRTPQ…LGRLDDQVKF (389 aa). A disordered region spans residues 716-735; it reads IDRKALPRPQATGAEPQALP. Residues 734 to 809 form the Carrier domain; that stretch reads LPSDPLEQAL…ALLELLRQAA (76 aa). Serine 768 is subject to O-(pantetheine 4'-phosphoryl)serine. Residues 823 to 1150 form a condensation region; that stretch reads GLSLAERRLW…CVTQALRQRG (328 aa).

The protein belongs to the NRP synthetase family. Requires pantetheine 4'-phosphate as cofactor.

It catalyses the reaction holo-[peptidyl-carrier protein] + L-alanine + ATP = L-alanyl-[peptidyl-carrier protein] + AMP + diphosphate. Involved in the biosynthesis of the antimetabolite L-2-amino-4-methoxy-trans-3-butenoic acid (AMB), a non-proteinogenic amino acid which is toxic for prokaryotes and eukaryotes. Adenylates L-alanine and loads it onto its peptidyl carrier domain via a thioester linkage to the phosphopanthetheine moiety. In addition, loads activated L-Ala in trans onto the second carrier domain of AmbE. Can also activate L-Ser, Gly and D-Ala, albeit to a lower extent. The condensation domain of AmbB probably condenses the activated L-Ala and the L-Glu loaded on AmbE to form a L-Glu-L-Ala dipeptide at the first carrier domain of AmbE. The polypeptide is AMB antimetabolite synthetase AmbB (Pseudomonas aeruginosa (strain ATCC 15692 / DSM 22644 / CIP 104116 / JCM 14847 / LMG 12228 / 1C / PRS 101 / PAO1)).